Here is a 235-residue protein sequence, read N- to C-terminus: Glutathione S-transferase 1 (235 aa).

The region spanning 36–113 (EKYTLTYFNG…LLGGRFGLLG (78 aa)) is the GST N-terminal domain. Residues Tyr42, Trp73, Lys77, Val85, and 97-98 (ES) contribute to the glutathione site. The GST C-terminal domain occupies 115–235 (NDWEEAKIMA…WIKKRPKTYF (121 aa)).

It belongs to the GST superfamily. As to quaternary structure, homodimer.

The catalysed reaction is RX + glutathione = an S-substituted glutathione + a halide anion + H(+). The protein is Glutathione S-transferase 1 (GST1) of Onchocerca volvulus.